The chain runs to 781 residues: 5-methyltetrahydropteroyltriglutamate--homocysteine methyltransferase (781 aa).

Residues 20–23 and lysine 131 each bind 5-methyltetrahydropteroyltri-L-glutamate; that span reads RELK. L-homocysteine-binding positions include 453–455 and glutamate 506; that span reads IGS. L-methionine-binding positions include 453-455 and glutamate 506; that span reads IGS. 5-methyltetrahydropteroyltri-L-glutamate-binding positions include 537–538 and tryptophan 583; that span reads RC. Aspartate 621 is an L-homocysteine binding site. Position 621 (aspartate 621) interacts with L-methionine. Residue glutamate 627 participates in 5-methyltetrahydropteroyltri-L-glutamate binding. Histidine 663, cysteine 665, and glutamate 687 together coordinate Zn(2+). Catalysis depends on histidine 716, which acts as the Proton donor. Residue cysteine 748 coordinates Zn(2+).

The protein belongs to the vitamin-B12 independent methionine synthase family. Requires Zn(2+) as cofactor.

The catalysed reaction is 5-methyltetrahydropteroyltri-L-glutamate + L-homocysteine = tetrahydropteroyltri-L-glutamate + L-methionine. The protein operates within amino-acid biosynthesis; L-methionine biosynthesis via de novo pathway; L-methionine from L-homocysteine (MetE route): step 1/1. In terms of biological role, catalyzes the transfer of a methyl group from 5-methyltetrahydrofolate to homocysteine resulting in methionine formation. The protein is 5-methyltetrahydropteroyltriglutamate--homocysteine methyltransferase of Bradyrhizobium diazoefficiens (strain JCM 10833 / BCRC 13528 / IAM 13628 / NBRC 14792 / USDA 110).